Consider the following 123-residue polypeptide: MTLTLTEAAEFRLRTFLLSFSKDENSTQRGIRVAVEDGGCSGYQYSIKIINAPQADDMVLQQGKLRIYVDSQSAPLLEGVVVDFVDGLLESGFKFSNPNATDTCGCGKSFQAGNCSPAGVPCS.

The protein belongs to the HesB/IscA family.

May be required for efficient nitrogen fixation. In Trichormus variabilis (strain ATCC 29413 / PCC 7937) (Anabaena variabilis), this protein is Protein HesB, vegetative (hesB2).